A 255-amino-acid chain; its full sequence is Vitamin B12 import ATP-binding protein BtuD (255 aa).

Positions 2–240 constitute an ABC transporter domain; it reads MRVKHIAVGS…AGLAEVFKTQ (239 aa). Residue 30-37 coordinates ATP; the sequence is GPNGSGKS.

Belongs to the ABC transporter superfamily. Vitamin B12 importer (TC 3.A.1.13.1) family. The complex is composed of two ATP-binding proteins (BtuD), two transmembrane proteins (BtuC) and a solute-binding protein (BtuF).

It is found in the cell inner membrane. It catalyses the reaction an R-cob(III)alamin(out) + ATP + H2O = an R-cob(III)alamin(in) + ADP + phosphate + H(+). Functionally, part of the ABC transporter complex BtuCDF involved in vitamin B12 import. Responsible for energy coupling to the transport system. In Vibrio parahaemolyticus serotype O3:K6 (strain RIMD 2210633), this protein is Vitamin B12 import ATP-binding protein BtuD.